The sequence spans 882 residues: MAEHSAPALEIDPKYGPFDKHTPMMQQYLKLKSAHPHTLVFYRMGDFYELFFEDAEKAARLLDITLTSRGTTNGQPIRMAGVPFHAVEQYLAKLVKLGESVAICEQIGDPATTKGPVERKVVRVVTPGTLTDAALLSDKVNNHLLAIAQIPGKRGAAPLVGLAWLNLVGGELRLMECSAEQLDRELERIRPAEVLADDATLNAVAFDVARTRLPDWHFDVEAGARRLREQLGVASLVAFGCETLTAALAAAGALLNYAAATQGQSLRHVIGLTVEHESEFIGLDTATRRNLELTETLRGQESPTLFSLLDTCATSMGSRLLRHWLHHPLRDRAVPQARQQAIEVLLAGDWQSLRGTLRTLSDVERITGRLALLSARPRDLSSLRDTLARLPEVRDQLPQSDDAQLLGDLHAALAIPEDAHALLQRAVMAEPAAMVRDGGVIARGYDADLDELRDISENCGQFLVDLEARERERTGIANLRVEYNRVHGFYIEVTNGQAAKVPDDYRRRQTLKNAERYITPELKAFEDKALSAQDRALSREKYLYEDLLQKLLPHLPVLKRIAAALAQADVLATLAERAHALSWSRPALTDAPGIELIRARHPVVEQQVEQFVANDCVLQETRKLLLITGPNMGGKSTFMRQTALVVLLAYVGAFVPADAATIGPIDRIFTRIGAADDLAGGRSTFMVEMTEAAAILHRATPNSLVLMDEIGRGTSTFDGLALAWAIARHLLSHNRSHTLFATHYFELTQLPQEFAQAANVHLSAVEHGDGIVFLHAVQEGPASQSYGLQVAQLAGVPQPVIRAARKRLAWLEQHSADTGATPQLDLFALPSDPSDDDAAEAAAPAAPSALAEALDGIDPDSMTPRDALDALYRLKALSDASA.

ATP is bound at residue Gly-629–Ser-636.

The protein belongs to the DNA mismatch repair MutS family.

Its function is as follows. This protein is involved in the repair of mismatches in DNA. It is possible that it carries out the mismatch recognition step. This protein has a weak ATPase activity. The protein is DNA mismatch repair protein MutS of Ralstonia nicotianae (strain ATCC BAA-1114 / GMI1000) (Ralstonia solanacearum).